The chain runs to 163 residues: uncharacterized protein (163 aa).

A run of 4 helical transmembrane segments spans residues 19–39 (GPPS…SEGI), 63–83 (FFAD…LLGL), 87–107 (VAAV…KLRA), and 119–139 (FWGM…LIFL).

The protein belongs to the DoxX family.

Its subcellular location is the cell membrane. This is an uncharacterized protein from Mycobacterium tuberculosis (strain ATCC 25618 / H37Rv).